Reading from the N-terminus, the 226-residue chain is 7-cyano-7-deazaguanine synthase (226 aa).

10–20 provides a ligand contact to ATP; that stretch reads LSGGLDSATAA. Zn(2+)-binding residues include cysteine 191, cysteine 199, cysteine 202, and cysteine 205.

This sequence belongs to the QueC family. Requires Zn(2+) as cofactor.

The enzyme catalyses 7-carboxy-7-deazaguanine + NH4(+) + ATP = 7-cyano-7-deazaguanine + ADP + phosphate + H2O + H(+). It functions in the pathway purine metabolism; 7-cyano-7-deazaguanine biosynthesis. In terms of biological role, catalyzes the ATP-dependent conversion of 7-carboxy-7-deazaguanine (CDG) to 7-cyano-7-deazaguanine (preQ(0)). The polypeptide is 7-cyano-7-deazaguanine synthase (Synechococcus sp. (strain CC9902)).